A 320-amino-acid chain; its full sequence is Glutaminase (320 aa).

S70, N121, E165, N172, Y196, Y248, and V266 together coordinate substrate.

The protein belongs to the glutaminase family. Homotetramer.

The catalysed reaction is L-glutamine + H2O = L-glutamate + NH4(+). This is Glutaminase from Mycobacterium marinum (strain ATCC BAA-535 / M).